The following is a 1050-amino-acid chain: FHIP family protein GE18198 (1050 aa).

Residues serine 498 and serine 805 each carry the phosphoserine modification. 4 disordered regions span residues 800–827 (KGNE…GQLR), 865–888 (TSMF…SASS), 911–954 (TDGR…SGSN), and 968–995 (SNTT…SEPA). The segment covering 808 to 826 (HHSQQQQMATNSGQQQGQL) has biased composition (polar residues). Low complexity predominate over residues 872–888 (SASNTSTTPPNGSSASS). The segment covering 918–935 (HAQTSAGTCETSLSTQPQ) has biased composition (polar residues). A compositionally biased stretch (low complexity) spans 941 to 954 (TGAIATSATASGSN). A compositionally biased stretch (polar residues) spans 968-977 (SNTTTHSAST).

It belongs to the FHIP family.

The polypeptide is FHIP family protein GE18198 (Drosophila yakuba (Fruit fly)).